The primary structure comprises 42 residues: Potassium channel toxin gamma-KTx 1.4 (42 aa).

Cystine bridges form between cysteine 5-cysteine 23, cysteine 11-cysteine 34, cysteine 20-cysteine 39, and cysteine 24-cysteine 41.

Belongs to the ergtoxin family. Gamma-KTx 1 subfamily. In terms of tissue distribution, expressed by the venom gland.

It localises to the secreted. Functionally, blocks Kv11/ERG potassium channels. In Centruroides sculpturatus (Arizona bark scorpion), this protein is Potassium channel toxin gamma-KTx 1.4.